A 549-amino-acid polypeptide reads, in one-letter code: ATP synthase subunit alpha (549 aa).

An ATP-binding site is contributed by 172 to 179; that stretch reads GDRKTGKT. Positions 513–549 are disordered; sequence SSTGESVVPDEHVEAMDEEDLGKESVKVKKPAPQKKK. The segment covering 540-549 has biased composition (basic residues); that stretch reads VKKPAPQKKK.

The protein belongs to the ATPase alpha/beta chains family. In terms of assembly, F-type ATPases have 2 components, CF(1) - the catalytic core - and CF(0) - the membrane proton channel. CF(1) has five subunits: alpha(3), beta(3), gamma(1), delta(1), epsilon(1). CF(0) has three main subunits: a(1), b(2) and c(9-12). The alpha and beta chains form an alternating ring which encloses part of the gamma chain. CF(1) is attached to CF(0) by a central stalk formed by the gamma and epsilon chains, while a peripheral stalk is formed by the delta and b chains.

Its subcellular location is the cell membrane. It carries out the reaction ATP + H2O + 4 H(+)(in) = ADP + phosphate + 5 H(+)(out). Functionally, produces ATP from ADP in the presence of a proton gradient across the membrane. The alpha chain is a regulatory subunit. This is ATP synthase subunit alpha from Mycobacterium marinum (strain ATCC BAA-535 / M).